A 1218-amino-acid polypeptide reads, in one-letter code: Coatomer subunit alpha-1 (1218 aa).

9 WD repeats span residues 7–48 (TKSN…DRFD), 49–88 (EHDG…CLFT), 91–132 (GHLD…AVLT), 133–172 (GHNH…KKTV), 202–241 (GHDR…AWEV), 246–285 (GHMN…GIQT), 288–326 (REHD…PAFS), 363–404 (SLNQ…AGRA), and 450–489 (PLPI…GELQ). The disordered stretch occupies residues 857–882 (NGGDGFDAEEGEANEEDGEEGGWDLE). Positions 862–882 (FDAEEGEANEEDGEEGGWDLE) are enriched in acidic residues.

As to quaternary structure, oligomeric complex that consists of at least the alpha, beta, beta', gamma, delta, epsilon and zeta subunits.

The protein resides in the cytoplasm. It is found in the golgi apparatus membrane. Its subcellular location is the cytoplasmic vesicle. It localises to the COPI-coated vesicle membrane. The coatomer is a cytosolic protein complex that binds to dilysine motifs and reversibly associates with Golgi non-clathrin-coated vesicles, which further mediate biosynthetic protein transport from the ER, via the Golgi up to the trans Golgi network. Coatomer complex is required for budding from Golgi membranes, and is essential for the retrograde Golgi-to-ER transport of dilysine-tagged proteins. This chain is Coatomer subunit alpha-1, found in Oryza sativa subsp. japonica (Rice).